We begin with the raw amino-acid sequence, 148 residues long: Single-stranded DNA-binding protein 2 (148 aa).

Residues 4 to 109 (INSVIIAGNL…IKARRIQFLN (106 aa)) form the SSB domain.

In terms of assembly, homotetramer.

This Chlorobaculum tepidum (strain ATCC 49652 / DSM 12025 / NBRC 103806 / TLS) (Chlorobium tepidum) protein is Single-stranded DNA-binding protein 2 (ssb2).